The primary structure comprises 219 residues: Small ribosomal subunit protein uS5 (219 aa).

The S5 DRBM domain maps to 52–115 (LDDEVLDINM…DVAKLNLISV (64 aa)). Residues 196–219 (LRNASQSRTPRRAAAKQREQEVSE) form a disordered region.

This sequence belongs to the universal ribosomal protein uS5 family. As to quaternary structure, part of the 30S ribosomal subunit. Contacts protein S4.

In terms of biological role, with S4 and S12 plays an important role in translational accuracy. The protein is Small ribosomal subunit protein uS5 of Haloquadratum walsbyi (strain DSM 16790 / HBSQ001).